Consider the following 313-residue polypeptide: Olfactory receptor 1J1 (313 aa).

Over 1–25 the chain is Extracellular; that stretch reads MRLKNHSSVSEFLLLGFPIRPEQGG. A glycan (N-linked (GlcNAc...) asparagine) is linked at Asn5. A helical transmembrane segment spans residues 26-46; sequence IFFSLFLAMYLITVLGNLLII. The Cytoplasmic segment spans residues 47 to 57; that stretch reads LLIRLDSHLHT. The chain crosses the membrane as a helical span at residues 58-78; sequence PMYFFLSHLAFTDISFSSVTV. Residues 79–97 lie on the Extracellular side of the membrane; it reads PKMLTKVQNQPIPITYEEC. The cysteines at positions 97 and 189 are disulfide-linked. A helical membrane pass occupies residues 98 to 118; it reads VSQTYFFIFFADLDSFLITSM. Residues 119 to 142 are Cytoplasmic-facing; sequence AYDRYMAICHPLHYITIMSQSRCA. Residues 143-163 traverse the membrane as a helical segment; sequence MLVAVSWVIASACALLHSLLL. Residues 164–196 lie on the Extracellular side of the membrane; that stretch reads DQLSFCADHTVPHFFCDLGALLKLSCSDTSLNQ. Residues 197-217 traverse the membrane as a helical segment; sequence LVIFTAGLAAIMLPFLCILIS. The Cytoplasmic portion of the chain corresponds to 218–240; the sequence is YGRIGFTILQVPTTKGICKALST. Residues 241-261 form a helical membrane-spanning segment; sequence CGSHLSVVALYYGSIIGLYFL. Over 262–271 the chain is Extracellular; sequence PPSNSKINNN. A helical transmembrane segment spans residues 272-292; that stretch reads IVASVMYTVVTPMLNPFIYSL. Topologically, residues 293-313 are cytoplasmic; it reads RNKDMKGALKKLLSKKTEFSK.

This sequence belongs to the G-protein coupled receptor 1 family.

It is found in the cell membrane. Functionally, odorant receptor. This chain is Olfactory receptor 1J1, found in Mus musculus (Mouse).